The sequence spans 594 residues: Jacalin-related lectin 44 (594 aa).

The interval 1 to 23 is disordered; that stretch reads MIQKLGAKGIKSDERNQREWDDG. Jacalin-type lectin domains are found at residues 2–148, 151–293, 296–441, and 448–588; these read IQKL…YFIS, PTRL…YFST, PNKL…YYRP, and VKRL…HVIP. A compositionally biased stretch (basic and acidic residues) spans 10–23; the sequence is IKSDERNQREWDDG.

It belongs to the jacalin lectin family.

The polypeptide is Jacalin-related lectin 44 (JAL44) (Arabidopsis thaliana (Mouse-ear cress)).